The sequence spans 293 residues: 33 kDa chaperonin (293 aa).

2 disulfide bridges follow: C235–C237 and C267–C270.

This sequence belongs to the HSP33 family. Post-translationally, under oxidizing conditions two disulfide bonds are formed involving the reactive cysteines. Under reducing conditions zinc is bound to the reactive cysteines and the protein is inactive.

The protein resides in the cytoplasm. Redox regulated molecular chaperone. Protects both thermally unfolding and oxidatively damaged proteins from irreversible aggregation. Plays an important role in the bacterial defense system toward oxidative stress. In Deinococcus radiodurans (strain ATCC 13939 / DSM 20539 / JCM 16871 / CCUG 27074 / LMG 4051 / NBRC 15346 / NCIMB 9279 / VKM B-1422 / R1), this protein is 33 kDa chaperonin.